A 297-amino-acid polypeptide reads, in one-letter code: MRIAVIGAGKWGSALHLALKENHNCFISSLHQRDLEDFVSIKEALECEYLVFALSSQGMRAWLKENFINKGQKILIASKGIEDQSCQFLDEIFLDFVPKENFCVLSGPSFAAEVMQKLPTALMISGINQELCKKFASFFPDFIKTYIDNDVRGAEICGAYKNVLAIASGISDGLKLGNNARAALISRGLIEMHRFGKFFGAKEETFLGLSGAGDLFLTATSVLSRNYRVGLKLAQNQKLDSILVELNEVAEGVKTAYAIEKLAKMKGIYTPIVNEVVAIFKGKSVQEATQSLLKQND.

Trp-11, Arg-33, and Lys-79 together coordinate NADPH. The sn-glycerol 3-phosphate site is built by Lys-79, Gly-107, and Ser-109. Ala-111 provides a ligand contact to NADPH. 5 residues coordinate sn-glycerol 3-phosphate: Lys-161, Asp-214, Ser-224, Arg-225, and Asn-226. Lys-161 serves as the catalytic Proton acceptor. NADPH is bound at residue Arg-225. 2 residues coordinate NADPH: Val-249 and Glu-251.

It belongs to the NAD-dependent glycerol-3-phosphate dehydrogenase family.

It is found in the cytoplasm. The enzyme catalyses sn-glycerol 3-phosphate + NAD(+) = dihydroxyacetone phosphate + NADH + H(+). The catalysed reaction is sn-glycerol 3-phosphate + NADP(+) = dihydroxyacetone phosphate + NADPH + H(+). The protein operates within membrane lipid metabolism; glycerophospholipid metabolism. Its function is as follows. Catalyzes the reduction of the glycolytic intermediate dihydroxyacetone phosphate (DHAP) to sn-glycerol 3-phosphate (G3P), the key precursor for phospholipid synthesis. The sequence is that of Glycerol-3-phosphate dehydrogenase [NAD(P)+] from Campylobacter jejuni subsp. jejuni serotype O:6 (strain 81116 / NCTC 11828).